The chain runs to 107 residues: uncharacterized protein (107 aa).

The chain crosses the membrane as a helical span at residues 25 to 42 (LSLCSVLLSWLICAMCLW).

The protein resides in the host membrane. This is an uncharacterized protein from Galliformes (FAdV-1).